We begin with the raw amino-acid sequence, 490 residues long: Ribulose bisphosphate carboxylase large chain (490 aa).

Asparagine 127 and threonine 177 together coordinate substrate. The active-site Proton acceptor is the lysine 179. Lysine 181 serves as a coordination point for substrate. Mg(2+) contacts are provided by lysine 205, aspartate 207, and glutamate 208. At lysine 205 the chain carries N6-carboxylysine. The Proton acceptor role is filled by histidine 297. Substrate contacts are provided by arginine 298, histidine 330, and serine 382.

Belongs to the RuBisCO large chain family. Type I subfamily. As to quaternary structure, heterohexadecamer of 8 large chains and 8 small chains. Mg(2+) serves as cofactor.

The protein localises to the plastid. The protein resides in the chloroplast. It carries out the reaction 2 (2R)-3-phosphoglycerate + 2 H(+) = D-ribulose 1,5-bisphosphate + CO2 + H2O. The catalysed reaction is D-ribulose 1,5-bisphosphate + O2 = 2-phosphoglycolate + (2R)-3-phosphoglycerate + 2 H(+). In terms of biological role, ruBisCO catalyzes two reactions: the carboxylation of D-ribulose 1,5-bisphosphate, the primary event in carbon dioxide fixation, as well as the oxidative fragmentation of the pentose substrate in the photorespiration process. Both reactions occur simultaneously and in competition at the same active site. The sequence is that of Ribulose bisphosphate carboxylase large chain from Phaeodactylum tricornutum (strain CCAP 1055/1).